A 437-amino-acid polypeptide reads, in one-letter code: Adenylosuccinate lyase (437 aa).

N(6)-(1,2-dicarboxyethyl)-AMP-binding positions include Arg-4–Tyr-5, Lys-70–Asp-72, and Thr-96–Ser-97. The active-site Proton donor/acceptor is the His-144. Gln-215 is a N(6)-(1,2-dicarboxyethyl)-AMP binding site. Catalysis depends on Ser-265, which acts as the Proton donor/acceptor. N(6)-(1,2-dicarboxyethyl)-AMP-binding positions include Ser-266, Lys-271–Asn-273, and Ser-310–Val-314.

The protein belongs to the lyase 1 family. Adenylosuccinate lyase subfamily. Homooligomer. Residues from neighboring subunits contribute catalytic and substrate-binding residues to each active site.

The enzyme catalyses N(6)-(1,2-dicarboxyethyl)-AMP = fumarate + AMP. It catalyses the reaction (2S)-2-[5-amino-1-(5-phospho-beta-D-ribosyl)imidazole-4-carboxamido]succinate = 5-amino-1-(5-phospho-beta-D-ribosyl)imidazole-4-carboxamide + fumarate. It participates in purine metabolism; AMP biosynthesis via de novo pathway; AMP from IMP: step 2/2. It functions in the pathway purine metabolism; IMP biosynthesis via de novo pathway; 5-amino-1-(5-phospho-D-ribosyl)imidazole-4-carboxamide from 5-amino-1-(5-phospho-D-ribosyl)imidazole-4-carboxylate: step 2/2. Catalyzes two reactions in de novo purine nucleotide biosynthesis. Catalyzes the breakdown of 5-aminoimidazole- (N-succinylocarboxamide) ribotide (SAICAR or 2-[5-amino-1-(5-phospho-beta-D-ribosyl)imidazole-4-carboxamido]succinate) to 5-aminoimidazole-4-carboxamide ribotide (AICAR or 5-amino-1-(5-phospho-beta-D-ribosyl)imidazole-4-carboxamide) and fumarate, and of adenylosuccinate (ADS or N(6)-(1,2-dicarboxyethyl)-AMP) to adenosine monophosphate (AMP) and fumarate. The polypeptide is Adenylosuccinate lyase (purB) (Aquifex aeolicus (strain VF5)).